We begin with the raw amino-acid sequence, 721 residues long: U3 small nucleolar RNA-associated protein 25 (721 aa).

Residues 1–14 are compositionally biased toward basic and acidic residues; it reads MSDSSVREKNDNFR. The interval 1–168 is disordered; it reads MSDSSVREKN…QDPFESHFNQ (168 aa). The segment covering 15–31 has biased composition (basic residues); sequence GYRKRGRQELRKIKRSS. Phosphoserine occurs at positions 53 and 63. The segment covering 55-72 has biased composition (acidic residues); it reads EDEVSDVDSGDDFDIEDE. A compositionally biased stretch (basic and acidic residues) spans 88–105; that stretch reads KSEHPEPKRRRREADESN. Residues 140–161 show a composition bias toward acidic residues; that stretch reads DDNDDDSSGDEKDIDSEDEQDP. Position 196 is a phosphoserine (serine 196).

It belongs to the UTP25 family. As to quaternary structure, interacts with snoRNA U3. Interacts with MPP10, NOP19, RRP9, UTP8 and UTP18. Component of the ribosomal small subunit (SSU) processome composed of at least 40 protein subunits and snoRNA U3.

The protein resides in the nucleus. It localises to the nucleolus. DEAD-box RNA helicase-like protein required for pre-18S rRNA processing, specifically at sites A0, A1, and A2. This chain is U3 small nucleolar RNA-associated protein 25 (UTP25), found in Saccharomyces cerevisiae (strain ATCC 204508 / S288c) (Baker's yeast).